The following is a 550-amino-acid chain: Crystal protein (550 aa).

An N-terminal signal peptide occupies residues 1-19; sequence MNKIIILLIILLSFDIISA. A disulfide bond links Cys-91 and Cys-111. Residue Asn-156 is glycosylated (N-linked (GlcNAc...) asparagine). The Acyl-ester intermediate role is filled by Ser-215. An intrachain disulfide couples Cys-267 to Cys-274. Residues Glu-340 and His-443 each act as charge relay system in the active site. Asn-506 carries N-linked (GlcNAc...) asparagine glycosylation.

This sequence belongs to the type-B carboxylesterase/lipase family.

It is found in the cytoplasmic vesicle. The protein resides in the esterosome membrane. The chain is Crystal protein (cryS) from Dictyostelium discoideum (Social amoeba).